The following is a 150-amino-acid chain: Putative pre-16S rRNA nuclease (150 aa).

It belongs to the YqgF nuclease family.

It is found in the cytoplasm. Functionally, could be a nuclease involved in processing of the 5'-end of pre-16S rRNA. The sequence is that of Putative pre-16S rRNA nuclease from Chlamydia felis (strain Fe/C-56) (Chlamydophila felis).